We begin with the raw amino-acid sequence, 195 residues long: Sec-independent protein translocase protein TatB (195 aa).

Residues 2-22 (FSNVGWGEVLVLLIVALFLIG) traverse the membrane as a helical segment. The span at 103-125 (VKDTVDTVRKPNLRESLKADKTK) shows a compositional bias: basic and acidic residues. A disordered region spans residues 103–195 (VKDTVDTVRK…APGYGWEDVT (93 aa)). Polar residues-rich tracts occupy residues 127-139 (SAQP…SGSA) and 146-155 (VTQQSNAGES).

It belongs to the TatB family. The Tat system comprises two distinct complexes: a TatABC complex, containing multiple copies of TatA, TatB and TatC subunits, and a separate TatA complex, containing only TatA subunits. Substrates initially bind to the TatABC complex, which probably triggers association of the separate TatA complex to form the active translocon.

It is found in the cell membrane. In terms of biological role, part of the twin-arginine translocation (Tat) system that transports large folded proteins containing a characteristic twin-arginine motif in their signal peptide across membranes. Together with TatC, TatB is part of a receptor directly interacting with Tat signal peptides. TatB may form an oligomeric binding site that transiently accommodates folded Tat precursor proteins before their translocation. The polypeptide is Sec-independent protein translocase protein TatB (Corynebacterium jeikeium (strain K411)).